A 365-amino-acid chain; its full sequence is tRNA (guanine(6)-N2)-methyltransferase (365 aa).

The 114-residue stretch at 69 to 182 (NENSRLLHRV…KDVFFLGIDT (114 aa)) folds into the THUMP domain. S-adenosyl-L-methionine-binding positions include 198 to 202 (HPAHL), 228 to 230 (SGT), Glu-248, 276 to 277 (DA), and Asn-293.

The protein belongs to the methyltransferase superfamily. As to quaternary structure, monomer in solution.

It localises to the cytoplasm. It catalyses the reaction guanosine(6) in tRNA + S-adenosyl-L-methionine = N(2)-methylguanosine(6) in tRNA + S-adenosyl-L-homocysteine + H(+). Its function is as follows. S-adenosyl-L-methionine-dependent methyltransferase that catalyzes the methylation of the guanosine nucleotide at position 6 (m2G6) in tRNA(Phe). The polypeptide is tRNA (guanine(6)-N2)-methyltransferase (Pyrococcus furiosus (strain ATCC 43587 / DSM 3638 / JCM 8422 / Vc1)).